Reading from the N-terminus, the 122-residue chain is Small ribosomal subunit protein bS16 (122 aa).

The disordered stretch occupies residues A87–A122. The span at R103–A122 shows a compositional bias: low complexity.

This sequence belongs to the bacterial ribosomal protein bS16 family.

This chain is Small ribosomal subunit protein bS16, found in Methylocella silvestris (strain DSM 15510 / CIP 108128 / LMG 27833 / NCIMB 13906 / BL2).